A 123-amino-acid chain; its full sequence is Small ribosomal subunit protein uS12 (123 aa).

The segment at 1-22 (MATINQLVRKPRKRKAKTSDVR) is disordered. D89 carries the post-translational modification 3-methylthioaspartic acid. Positions 101-123 (ALDTSGVNDRKRGRSKYGTKRPK) are disordered. The segment covering 111-123 (KRGRSKYGTKRPK) has biased composition (basic residues).

Belongs to the universal ribosomal protein uS12 family. As to quaternary structure, part of the 30S ribosomal subunit. Contacts proteins S8 and S17. May interact with IF1 in the 30S initiation complex.

Functionally, with S4 and S5 plays an important role in translational accuracy. Its function is as follows. Interacts with and stabilizes bases of the 16S rRNA that are involved in tRNA selection in the A site and with the mRNA backbone. Located at the interface of the 30S and 50S subunits, it traverses the body of the 30S subunit contacting proteins on the other side and probably holding the rRNA structure together. The combined cluster of proteins S8, S12 and S17 appears to hold together the shoulder and platform of the 30S subunit. The polypeptide is Small ribosomal subunit protein uS12 (Teredinibacter turnerae (strain ATCC 39867 / T7901)).